The sequence spans 285 residues: uncharacterized protein (285 aa).

Mn(2+)-binding residues include H110, D131, H133, D135, D214, and D216.

This sequence belongs to the arginase family. Mn(2+) serves as cofactor.

This is an uncharacterized protein from Methanothermus fervidus.